The primary structure comprises 256 residues: Trypsin alpha (256 aa).

The first 22 residues, 1–22, serve as a signal peptide directing secretion; the sequence is MLKIVILLSAVVCALGGTVPEG. Residues 23–30 constitute a propeptide, activation peptide; sequence LLPQLDGR. Positions 31 to 254 constitute a Peptidase S1 domain; sequence IVGGSATTIS…LRSWVVSTAN (224 aa). A disulfide bridge links Cys-56 with Cys-72. Residues His-71 and Asp-116 each act as charge relay system in the active site. Intrachain disulfides connect Cys-180–Cys-197 and Cys-206–Cys-230. Ser-210 serves as the catalytic Charge relay system.

Belongs to the peptidase S1 family. Synthesized in the midgut of both larvae and adults, primarily in the ventriculus and gastric caeca.

Its subcellular location is the secreted. The protein localises to the extracellular space. The enzyme catalyses Preferential cleavage: Arg-|-Xaa, Lys-|-Xaa.. The sequence is that of Trypsin alpha (alphaTry) from Drosophila melanogaster (Fruit fly).